The following is a 1339-amino-acid chain: DNA-directed RNA polymerase subunit beta'' (1339 aa).

Zn(2+)-binding residues include Cys-226, Cys-299, Cys-306, and Cys-309.

It belongs to the RNA polymerase beta' chain family. RpoC2 subfamily. In terms of assembly, in plastids the minimal PEP RNA polymerase catalytic core is composed of four subunits: alpha, beta, beta', and beta''. When a (nuclear-encoded) sigma factor is associated with the core the holoenzyme is formed, which can initiate transcription. Requires Zn(2+) as cofactor.

The protein localises to the plastid. The protein resides in the chloroplast. It catalyses the reaction RNA(n) + a ribonucleoside 5'-triphosphate = RNA(n+1) + diphosphate. Its function is as follows. DNA-dependent RNA polymerase catalyzes the transcription of DNA into RNA using the four ribonucleoside triphosphates as substrates. The polypeptide is DNA-directed RNA polymerase subunit beta'' (Cycas taitungensis (Prince sago)).